The following is a 503-amino-acid chain: METLLEQQRRLHEERERLVKLMVDEHATKKPGEKERIHSEHRLKYLMELHHNSTSQLRDLYEDKDNERKAEIAALSGPNEFNEFYARLKQIKQFYKSHPAEVSVPLSVEFDEMIRVYNNPDDMSALVEFTDEEGGGRYLDLNECYELYLNLRSVEKLDYITYLMSFDHVFDIPRERKNREYRIYIETLNDYLHHFILRIQPLLDLEGELLKVELDFQRQWLMGTFPGFSIKETESALANTGAHLDLSAFSSWEELASLGLDRLKSALVALGLKCGGTLEERAQRLFSTKGKSTLDPALMAKKPSAKTASAQSREHERHKEIAQLEALLYKYADLLSEQRAATKENVQRKQARTGGERDDSDVEASESDNEDDPDADDVPYNPKNLPLGWDGKPIPYWLYKLHGLNISYNCEICGNFTYKGPKAFQRHFAEWRHAHGMRCLGIPNTAHFANVTQIEDAITLWEKLKSQKQSERWVADQEEEFEDSLGNVVNRKTFEDLKRQGLL.

2 disordered regions span residues 296–317 (PALMAKKPSAKTASAQSREHER) and 341–384 (ATKE…NPKN). A compositionally biased stretch (acidic residues) spans 358–377 (DDSDVEASESDNEDDPDADD). Residues Ser-360, Ser-365, and Ser-367 each carry the phosphoserine modification. The Matrin-type zinc finger occupies 408-439 (YNCEICGNFTYKGPKAFQRHFAEWRHAHGMRC).

The protein belongs to the SF3A3 family. In terms of assembly, probable component of a the U2 small nuclear ribonucleoproteins complex (U2 snRNP). As to expression, ubiquitous. In ovaries and testes, it is expressed in all germ and somatic cells. Highly expressed in spermatogonias and spermatocytes. Highly expressed in the germ cells of larval testes, while it is weakly expressed in fat body cells, in polyploid nuclei of salivary glands, and in larval brain.

It is found in the nucleus. Probable subunit of a splicing factor complex required for 'A' complex assembly formed by the stable binding of U2 snRNP to the branchpoint sequence (BPS) in pre-mRNA. Involved in male fertility. In Drosophila melanogaster (Fruit fly), this protein is Splicing factor 3A subunit 3 (noi).